The following is a 227-amino-acid chain: Cytochrome c oxidase subunit 2 (227 aa).

At 1–14 (MAHAAQVGLQDATS) the chain is on the mitochondrial intermembrane side. A helical membrane pass occupies residues 15 to 45 (PIMEELVIFHDHALMIIFLICFLVLYALFLT). Topologically, residues 46 to 59 (LTTKLTNTSISDAQ) are mitochondrial matrix. Residues 60-87 (EMETIWTILPAIILILIALPSLRILYLT) form a helical membrane-spanning segment. Topologically, residues 88 to 227 (DEINDPSFTI…IFEMGPVFTL (140 aa)) are mitochondrial intermembrane. Cu cation contacts are provided by His161, Cys196, Glu198, Cys200, His204, and Met207. Residue Glu198 participates in Mg(2+) binding.

The protein belongs to the cytochrome c oxidase subunit 2 family. As to quaternary structure, component of the cytochrome c oxidase (complex IV, CIV), a multisubunit enzyme composed of 14 subunits. The complex is composed of a catalytic core of 3 subunits MT-CO1, MT-CO2 and MT-CO3, encoded in the mitochondrial DNA, and 11 supernumerary subunits COX4I, COX5A, COX5B, COX6A, COX6B, COX6C, COX7A, COX7B, COX7C, COX8 and NDUFA4, which are encoded in the nuclear genome. The complex exists as a monomer or a dimer and forms supercomplexes (SCs) in the inner mitochondrial membrane with NADH-ubiquinone oxidoreductase (complex I, CI) and ubiquinol-cytochrome c oxidoreductase (cytochrome b-c1 complex, complex III, CIII), resulting in different assemblies (supercomplex SCI(1)III(2)IV(1) and megacomplex MCI(2)III(2)IV(2)). Found in a complex with TMEM177, COA6, COX18, COX20, SCO1 and SCO2. Interacts with TMEM177 in a COX20-dependent manner. Interacts with COX20. Interacts with COX16. Requires Cu cation as cofactor.

Its subcellular location is the mitochondrion inner membrane. It carries out the reaction 4 Fe(II)-[cytochrome c] + O2 + 8 H(+)(in) = 4 Fe(III)-[cytochrome c] + 2 H2O + 4 H(+)(out). Functionally, component of the cytochrome c oxidase, the last enzyme in the mitochondrial electron transport chain which drives oxidative phosphorylation. The respiratory chain contains 3 multisubunit complexes succinate dehydrogenase (complex II, CII), ubiquinol-cytochrome c oxidoreductase (cytochrome b-c1 complex, complex III, CIII) and cytochrome c oxidase (complex IV, CIV), that cooperate to transfer electrons derived from NADH and succinate to molecular oxygen, creating an electrochemical gradient over the inner membrane that drives transmembrane transport and the ATP synthase. Cytochrome c oxidase is the component of the respiratory chain that catalyzes the reduction of oxygen to water. Electrons originating from reduced cytochrome c in the intermembrane space (IMS) are transferred via the dinuclear copper A center (CU(A)) of subunit 2 and heme A of subunit 1 to the active site in subunit 1, a binuclear center (BNC) formed by heme A3 and copper B (CU(B)). The BNC reduces molecular oxygen to 2 water molecules using 4 electrons from cytochrome c in the IMS and 4 protons from the mitochondrial matrix. The chain is Cytochrome c oxidase subunit 2 (MT-CO2) from Pongo abelii (Sumatran orangutan).